The chain runs to 133 residues: Large ribosomal subunit protein bL21 (133 aa).

Positions 1-22 (MAEKPAAKPKAAAAKAEAKDQS) are disordered.

This sequence belongs to the bacterial ribosomal protein bL21 family. In terms of assembly, part of the 50S ribosomal subunit. Contacts protein L20.

This protein binds to 23S rRNA in the presence of protein L20. The polypeptide is Large ribosomal subunit protein bL21 (Prochlorococcus marinus (strain MIT 9303)).